A 234-amino-acid polypeptide reads, in one-letter code: MIRTLFSDTPFPPLEQALIEPNGLLAAGGDLSPERLISAYQQGIFPWFNQGEVILWWSPNPRMVLFPQELKISRSLHKTLKKNHYQIRTDSAFTQVMQACAAPREKQTGTWIHPEMVAAYTTLHQRGIAHSVETWVDGELVGGLYGVAIGKAFFGESMFSRVPDASKIALVYLARQLERQGYGLIDCQMKTAHLMSMGAREIPRLQFSKLLGKLTDQPEQNRKWHFDFTWPKQQ.

Belongs to the L/F-transferase family.

The protein localises to the cytoplasm. The catalysed reaction is N-terminal L-lysyl-[protein] + L-leucyl-tRNA(Leu) = N-terminal L-leucyl-L-lysyl-[protein] + tRNA(Leu) + H(+). It carries out the reaction N-terminal L-arginyl-[protein] + L-leucyl-tRNA(Leu) = N-terminal L-leucyl-L-arginyl-[protein] + tRNA(Leu) + H(+). The enzyme catalyses L-phenylalanyl-tRNA(Phe) + an N-terminal L-alpha-aminoacyl-[protein] = an N-terminal L-phenylalanyl-L-alpha-aminoacyl-[protein] + tRNA(Phe). Functionally, functions in the N-end rule pathway of protein degradation where it conjugates Leu, Phe and, less efficiently, Met from aminoacyl-tRNAs to the N-termini of proteins containing an N-terminal arginine or lysine. This Nitrosomonas eutropha (strain DSM 101675 / C91 / Nm57) protein is Leucyl/phenylalanyl-tRNA--protein transferase.